Consider the following 313-residue polypeptide: Ribosomal RNA small subunit methyltransferase H (313 aa).

Residues 35–37 (GGH), D55, F79, D100, and Q107 contribute to the S-adenosyl-L-methionine site.

Belongs to the methyltransferase superfamily. RsmH family.

The protein localises to the cytoplasm. It catalyses the reaction cytidine(1402) in 16S rRNA + S-adenosyl-L-methionine = N(4)-methylcytidine(1402) in 16S rRNA + S-adenosyl-L-homocysteine + H(+). Its function is as follows. Specifically methylates the N4 position of cytidine in position 1402 (C1402) of 16S rRNA. The chain is Ribosomal RNA small subunit methyltransferase H from Burkholderia multivorans (strain ATCC 17616 / 249).